The primary structure comprises 383 residues: Dihydroorotase (383 aa).

Residues His-47 and His-49 each contribute to the Zn(2+) site. Residues 49 to 51 and Asn-81 each bind substrate; that span reads HFR. Positions 128, 159, 198, and 264 each coordinate Zn(2+). N6-carboxylysine is present on Lys-128. Asp-264 is an active-site residue. Substrate is bound by residues His-268 and 280 to 281; that span reads PG.

The protein belongs to the metallo-dependent hydrolases superfamily. DHOase family. Class I DHOase subfamily. It depends on Zn(2+) as a cofactor.

It catalyses the reaction (S)-dihydroorotate + H2O = N-carbamoyl-L-aspartate + H(+). Its pathway is pyrimidine metabolism; UMP biosynthesis via de novo pathway; (S)-dihydroorotate from bicarbonate: step 3/3. Functionally, catalyzes the reversible cyclization of carbamoyl aspartate to dihydroorotate. This is Dihydroorotase from Pyrobaculum aerophilum (strain ATCC 51768 / DSM 7523 / JCM 9630 / CIP 104966 / NBRC 100827 / IM2).